Consider the following 195-residue polypeptide: Glycerol-3-phosphate acyltransferase (195 aa).

A run of 6 helical transmembrane segments spans residues 2-22 (IFFSILITIFAYFLGSISSAI), 54-74 (IAISVILFDILKGAIPMWLGY), 80-100 (PIFLGATAVFSCLGHMYPIFF), 107-127 (GVATAFGVLTTIDLHLSIVMI), 132-152 (LTVLSFGYSSLGAIVTAFIIP), and 155-175 (AWHFQSQYLLPTIIISSLVVI).

This sequence belongs to the PlsY family. Probably interacts with PlsX.

The protein localises to the cell inner membrane. The enzyme catalyses an acyl phosphate + sn-glycerol 3-phosphate = a 1-acyl-sn-glycero-3-phosphate + phosphate. It functions in the pathway lipid metabolism; phospholipid metabolism. Functionally, catalyzes the transfer of an acyl group from acyl-phosphate (acyl-PO(4)) to glycerol-3-phosphate (G3P) to form lysophosphatidic acid (LPA). This enzyme utilizes acyl-phosphate as fatty acyl donor, but not acyl-CoA or acyl-ACP. This is Glycerol-3-phosphate acyltransferase from Blochmanniella pennsylvanica (strain BPEN).